A 1985-amino-acid chain; its full sequence is Voltage-dependent L-type calcium channel subunit alpha-1F (1985 aa).

A compositionally biased stretch (basic and acidic residues) spans 1 to 11; it reads MSESEVGKDTT. Residues 1-56 are disordered; that stretch reads MSESEVGKDTTPEPSPANGTGPGPEWGLCPGPPTVGTDTSGASGLGTPRRRTQHNK. At 1 to 92 the chain is on the cytoplasmic side; it reads MSESEVGKDT…RSCISIVEWK (92 aa). One copy of the I repeat lies at 79 to 375; the sequence is NPIRRSCISI…LVLGVLSGEF (297 aa). Residues 93-111 form a helical membrane-spanning segment; that stretch reads PFDILILLTIFANCVALGV. Residues 112–129 are Extracellular-facing; the sequence is YIPFPEDDSNTANHNLEQ. The helical transmembrane segment at 130–149 threads the bilayer; that stretch reads VEYVFLVIFTVETVLKIVAY. Residues 150-161 lie on the Cytoplasmic side of the membrane; it reads GLVLHPSAYIRN. A helical transmembrane segment spans residues 162 to 180; the sequence is GWNLLDFIIVVVGLFSVLL. Topologically, residues 181–201 are extracellular; the sequence is EQGPGRPGDAPHTGGKPGGFD. A helical transmembrane segment spans residues 202 to 220; it reads VKALRAFRVLRPLRLVSGV. The Cytoplasmic segment spans residues 221-239; it reads PSLHIVVNSIMKALVPLLH. A helical membrane pass occupies residues 240 to 259; it reads IALLVLFVIIIYAIIGLELF. The Extracellular segment spans residues 260–347; sequence LGRMHKTCYF…WMQDAMGYEL (88 aa). N295 is a glycosylation site (N-linked (GlcNAc...) asparagine). Ca(2+) is bound at residue E330. The helical transmembrane segment at 348–372 threads the bilayer; the sequence is PWVYFVSLVIFGSFFVLNLVLGVLS. The Cytoplasmic segment spans residues 373–529; the sequence is GEFSKEREKA…ARCRRAVKSN (157 aa). The binding to the beta subunit stretch occupies residues 395 to 412; the sequence is QQMEEDLRGYLDWITQAE. The span at 455–469 shows a compositional bias: low complexity; the sequence is SHSTRSTHSTSSHAS. The tract at residues 455 to 490 is disordered; that stretch reads SHSTRSTHSTSSHASLPASDTGSMTDTPGDEDEEEG. An II repeat occupies 515–761; it reads NRGLRARCRR…VFLAIAVDNL (247 aa). The chain crosses the membrane as a helical span at residues 530 to 549; it reads ACYWAVLLLVFLNTLTIASE. Topologically, residues 550-564 are extracellular; that stretch reads HHGQPLWLTQTQEYA. Residues 565–583 traverse the membrane as a helical segment; the sequence is NKVLLCLFTVEMLLKLYGL. At 584–591 the chain is on the cytoplasmic side; it reads GPSVYVAS. A helical transmembrane segment spans residues 592–610; it reads FFNRFDCFVVCGGILETTL. At 611–620 the chain is on the extracellular side; the sequence is VEVGAMQPLG. Residues 621 to 639 traverse the membrane as a helical segment; that stretch reads ISVLRCVRLLRIFKVTRHW. Over 640–658 the chain is Cytoplasmic; it reads ASLSNLVASLLNSMKSIAS. Residues 659-679 form a helical membrane-spanning segment; the sequence is LLLLLFLFIIIFSLLGMQLFG. At 680–733 the chain is on the extracellular side; it reads GKFNFDQTHTKRSTFDTFPQALLTVFQILTGEDWNVVMYDGIMAYGGPFFPGML. E711 contacts Ca(2+). The helical transmembrane segment at 734 to 758 threads the bilayer; the sequence is VCVYFIILFICGNYILLNVFLAIAV. Residues 759-876 lie on the Cytoplasmic side of the membrane; sequence DNLASGDAGT…KACHTLIHHH (118 aa). The interval 766–834 is disordered; sequence AGTAKDKGRE…EEEEENGAGH (69 aa). The segment covering 768–787 has biased composition (basic and acidic residues); it reads TAKDKGREKSSEGNPPKENK. The segment covering 810-830 has biased composition (acidic residues); that stretch reads MEEEEEEEEEEEEEEEEEEEN. The III repeat unit spans residues 858 to 1140; the sequence is CLSQTNPLRK…FFMMNIFVGF (283 aa). Residues 877 to 895 traverse the membrane as a helical segment; that stretch reads IFTSLILVFIILSSVSLAA. Residues 896–911 are Extracellular-facing; sequence EDPIRAHSFRNHILGY. Residues 912–931 form a helical membrane-spanning segment; the sequence is FDYAFTSIFTVEILLKMTVF. Topologically, residues 932–943 are cytoplasmic; it reads GAFLHRGSFCRS. The chain crosses the membrane as a helical span at residues 944–962; sequence WFNLLDLLVVSVSLISFGI. Residues 963–968 lie on the Extracellular side of the membrane; sequence HSSAIS. A helical membrane pass occupies residues 969-988; it reads VVKILRVLRVLRPLRAINRA. Topologically, residues 989 to 1007 are cytoplasmic; it reads KGLKHVVQCVFVAIRTIGN. A helical transmembrane segment spans residues 1008 to 1027; that stretch reads IMIVTTLLQFMFACIGVQLF. At 1028-1117 the chain is on the extracellular side; sequence KGKFYSCTDE…EGPIYNYHVE (90 aa). The interval 1065-1155 is dihydropyridine binding; it reads RLWVNSDFNF…RAQGEQEYQN (91 aa). Ca(2+) is bound at residue E1091. A helical transmembrane segment spans residues 1118–1138; it reads ISVFFIVYIIIIAFFMMNIFV. Over 1139–1195 the chain is Cytoplasmic; the sequence is GFVIITFRAQGEQEYQNCELDKNQRQCVEYALKAQPLRRYIPKNPHQYRVWATVNSR. Residues 1182 to 1449 form an IV repeat; the sequence is NPHQYRVWAT…LFVAVIMDNF (268 aa). The chain crosses the membrane as a helical span at residues 1196 to 1214; it reads AFEYLMFLLILLNTVALAM. Residues 1215–1229 lie on the Extracellular side of the membrane; that stretch reads QHYEQTAPFNYAMDI. A helical transmembrane segment spans residues 1230 to 1249; the sequence is LNMVFTGLFTIEMVLKIIAF. Residues 1250 to 1256 are Cytoplasmic-facing; sequence KPKHYFA. The helical transmembrane segment at 1257-1278 threads the bilayer; that stretch reads DAWNTFDALIVVGSVVDIAVTE. The Extracellular portion of the chain corresponds to 1279-1295; it reads VNNGGHLGESSEDTSRI. The helical transmembrane segment at 1296–1315 threads the bilayer; it reads SITFFRLFRVMRLVKLLSKG. Residues 1316-1334 are Cytoplasmic-facing; that stretch reads EGIRTLLWTFIKSFQALPY. The chain crosses the membrane as a helical span at residues 1335 to 1354; it reads VALLIAMIFFIYAVIGMQMF. Topologically, residues 1355 to 1421 are extracellular; the sequence is GLVALQDGTQ…GEEFTCGSSF (67 aa). The tract at residues 1402 to 1468 is dihydropyridine binding; sequence RCDPESDFGP…LGPHHLDEFK (67 aa). Residues 1414–1457 are phenylalkylamine binding; the sequence is EFTCGSSFAIVYFISFFMLCAFLIINLFVAVIMDNFDYLTRDWS. Residues 1422-1446 form a helical membrane-spanning segment; sequence AIVYFISFFMLCAFLIINLFVAVIM. The Cytoplasmic portion of the chain corresponds to 1447–1982; that stretch reads DNFDYLTRDW…EDLGDEMACV (536 aa). Disordered stretches follow at residues 1643–1729 and 1746–1778; these read VTEE…PHRR and LKGT…SFEP. A compositionally biased stretch (acidic residues) spans 1644–1665; the sequence is TEEEEEEEEAVGQEAEEEEAEN. Polar residues-rich tracts occupy residues 1675–1687 and 1713–1724; these read DSQP…SRIS and NSRQPSVIQAGS. Positions 1767–1776 are enriched in basic and acidic residues; that stretch reads DLDRAGRDSF.

The protein belongs to the calcium channel alpha-1 subunit (TC 1.A.1.11) family. CACNA1F subfamily. In terms of assembly, voltage-dependent calcium channels are multisubunit complexes, consisting of alpha-1, alpha-2, beta and delta subunits in a 1:1:1:1 ratio. The channel activity is directed by the pore-forming and voltage-sensitive alpha-1 subunit. In many cases, this subunit is sufficient to generate voltage-sensitive calcium channel activity. The auxiliary subunits beta and alpha-2/delta linked by a disulfide bridge regulate the channel activity. Interacts (via IQ domain) with CABP4; in a calcium independent manner. In terms of tissue distribution, expressed in the inner and outer nuclear layers and the genglion cell layer of the retina.

It is found in the membrane. The catalysed reaction is Ca(2+)(in) = Ca(2+)(out). In terms of biological role, voltage-sensitive calcium channels (VSCC) mediate the entry of calcium ions into excitable cells and are also involved in a variety of calcium-dependent processes, including muscle contraction, hormone or neurotransmitter release, gene expression, cell motility, cell division and cell death. The isoform alpha-1F gives rise to L-type calcium currents. Long-lasting (L-type) calcium channels belong to the 'high-voltage activated' (HVA) group. They are blocked by dihydropyridines (DHP), phenylalkylamines, and by benzothiazepines. Activates at more negative voltages and does not undergo calcium-dependent inactivation (CDI), due to incoming calcium ions, during depolarization. In Mus musculus (Mouse), this protein is Voltage-dependent L-type calcium channel subunit alpha-1F.